Here is a 198-residue protein sequence, read N- to C-terminus: Protein uvp1 (198 aa).

One can recognise a Resolvase/invertase-type recombinase catalytic domain in the interval 1 to 140 (MIIGYARKST…SGLAAARARG (140 aa)). Ser-9 functions as the O-(5'-phospho-DNA)-serine intermediate in the catalytic mechanism. A DNA-binding region (H-T-H motif) is located at residues 168 to 187 (VGAVAKRFNVSRMTIYRYTT).

It belongs to the site-specific recombinase resolvase family.

Functionally, cooperates with the mucAB genes in the DNA repair process. Could be a resolvase-invertase protein. The polypeptide is Protein uvp1 (uvp1) (Escherichia coli).